Here is a 325-residue protein sequence, read N- to C-terminus: L-lactate dehydrogenase (325 aa).

NAD(+) contacts are provided by residues Val-19, Asp-40, Lys-45, Tyr-70, and Gly-84–Ala-85. Residues Gln-87 and Arg-93 each contribute to the substrate site. Residues Thr-106, Ala-123–Asn-125, and Ser-148 contribute to the NAD(+) site. Residue Asn-125–Asp-128 coordinates substrate. Asp-153–Arg-156 lines the substrate pocket. Residues Arg-158 and His-173 each coordinate beta-D-fructose 1,6-bisphosphate. The active-site Proton acceptor is the His-180. Residue Tyr-225 is modified to Phosphotyrosine. A substrate-binding site is contributed by Thr-234.

This sequence belongs to the LDH/MDH superfamily. LDH family. Homotetramer.

The protein resides in the cytoplasm. It catalyses the reaction (S)-lactate + NAD(+) = pyruvate + NADH + H(+). The protein operates within fermentation; pyruvate fermentation to lactate; (S)-lactate from pyruvate: step 1/1. With respect to regulation, allosterically activated by fructose 1,6-bisphosphate (FBP). In terms of biological role, catalyzes the conversion of lactate to pyruvate. The polypeptide is L-lactate dehydrogenase (Latilactobacillus sakei (Lactobacillus sakei)).